Consider the following 126-residue polypeptide: Alpha-lactalbumin (126 aa).

Residues 1–126 enclose the C-type lysozyme domain; sequence RIFQICELSR…CNSDLDQWKC (126 aa). 4 disulfide bridges follow: Cys6–Cys126, Cys30–Cys117, Cys63–Cys82, and Cys78–Cys96. A glycan (N-linked (GlcNAc...) asparagine) is linked at Asn47. Ca(2+) is bound by residues Lys84, Asp87, Asp89, Asp92, and Asp93.

Belongs to the glycosyl hydrolase 22 family. As to quaternary structure, lactose synthase (LS) is a heterodimer of a catalytic component, beta1,4-galactosyltransferase (beta4Gal-T1) and a regulatory component, alpha-lactalbumin (LA). As to expression, mammary gland specific. Secreted in milk.

The protein resides in the secreted. Regulatory subunit of lactose synthase, changes the substrate specificity of galactosyltransferase in the mammary gland making glucose a good acceptor substrate for this enzyme. This enables LS to synthesize lactose, the major carbohydrate component of milk. In other tissues, galactosyltransferase transfers galactose onto the N-acetylglucosamine of the oligosaccharide chains in glycoproteins. In Ornithorhynchus anatinus (Duckbill platypus), this protein is Alpha-lactalbumin (LALBA).